The sequence spans 117 residues: Hemerythrin subunit beta (117 aa).

Fe cation-binding residues include His-24, His-53, Glu-57, His-72, His-76, His-105, and Asp-110.

Belongs to the hemerythrin family. Octamer composed of two types of chains: alpha and beta.

Hemerythrin is a respiratory protein in blood cells of certain marine worms. The oxygen-binding site in each chain contains two iron atoms. This chain is Hemerythrin subunit beta, found in Lingula anatina (Brachiopod).